The chain runs to 470 residues: Flotillin-like protein 1 (470 aa).

Cys35 carries S-palmitoyl cysteine lipidation. The stretch at 305-354 forms a coiled coil; it reads EYETKVQEANWELYNKQKQAEAVLYEKQKQAEAQKAQADAAFYSKQKEAE.

Belongs to the band 7/mec-2 family. Flotillin subfamily. Post-translationally, may be palmitoylated.

Its subcellular location is the cell membrane. It is found in the membrane. The protein localises to the caveola. May act as a scaffolding protein within caveolar membranes, functionally participating in formation of caveolae or caveolae-like vesicles. In Arabidopsis thaliana (Mouse-ear cress), this protein is Flotillin-like protein 1 (FLOT1).